The primary structure comprises 236 residues: Ribose-5-phosphate isomerase A (236 aa).

Substrate-binding positions include 33 to 36 (TGST), 90 to 93 (DGAD), and 103 to 106 (KGGG). Residue glutamate 112 is the Proton acceptor of the active site. Lysine 130 is a binding site for substrate.

The protein belongs to the ribose 5-phosphate isomerase family. In terms of assembly, homodimer.

The catalysed reaction is aldehydo-D-ribose 5-phosphate = D-ribulose 5-phosphate. The protein operates within carbohydrate degradation; pentose phosphate pathway; D-ribose 5-phosphate from D-ribulose 5-phosphate (non-oxidative stage): step 1/1. Functionally, catalyzes the reversible conversion of ribose-5-phosphate to ribulose 5-phosphate. The protein is Ribose-5-phosphate isomerase A of Nostoc sp. (strain PCC 7120 / SAG 25.82 / UTEX 2576).